The primary structure comprises 511 residues: Maturase K (511 aa).

This sequence belongs to the intron maturase 2 family. MatK subfamily.

The protein localises to the plastid. It is found in the chloroplast. Its function is as follows. Usually encoded in the trnK tRNA gene intron. Probably assists in splicing its own and other chloroplast group II introns. The sequence is that of Maturase K from Trifolium burchellianum (Wild clover).